The sequence spans 121 residues: C-type natriuretic peptide 4 (121 aa).

The N-terminal stretch at 1 to 22 (MNLSYLVACGLLVTFLSDKMDA) is a signal peptide. A propeptide spanning residues 23–96 (QPLTPAQQKS…SRRHKSGSKK (74 aa)) is cleaved from the precursor. Residues 80-109 (LLNDQPASRRHKSGSKKGGSTSRSGCFGHK) form a disordered region. A disulfide bridge links C105 with C121.

It belongs to the natriuretic peptide family. As to expression, brain, spinal cord, spleen, heart and fin, and to a lower extent in gill and ovary.

It localises to the secreted. Exhibits natriuretic and vasodepressant activity. Has cGMP-stimulating activity. May help to regulate body fluid homeostasis in a variety of aquatic environments. This chain is C-type natriuretic peptide 4, found in Oryzias latipes (Japanese rice fish).